The sequence spans 268 residues: Putative hydro-lyase Arad_8587 (268 aa).

Belongs to the D-glutamate cyclase family.

This Rhizobium rhizogenes (strain K84 / ATCC BAA-868) (Agrobacterium radiobacter) protein is Putative hydro-lyase Arad_8587.